The primary structure comprises 398 residues: Bifunctional enzyme IspD/IspF (398 aa).

Residues 1–234 form a 2-C-methyl-D-erythritol 4-phosphate cytidylyltransferase region; sequence MTNSPRTAAI…SRLMAALGDI (234 aa). Residues 235-398 form a 2-C-methyl-D-erythritol 2,4-cyclodiphosphate synthase region; sequence RTGTGYDVHA…LPWGADGLAG (164 aa). The a divalent metal cation site is built by D241 and H243. 4-CDP-2-C-methyl-D-erythritol 2-phosphate is bound by residues 241-243 and 267-268; these read DVH and HS. Residue H275 coordinates a divalent metal cation. 4-CDP-2-C-methyl-D-erythritol 2-phosphate contacts are provided by residues 289 to 291, 365 to 368, F372, and R375; these read DIG and TTSE.

In the N-terminal section; belongs to the IspD/TarI cytidylyltransferase family. IspD subfamily. This sequence in the C-terminal section; belongs to the IspF family. The cofactor is a divalent metal cation.

It carries out the reaction 2-C-methyl-D-erythritol 4-phosphate + CTP + H(+) = 4-CDP-2-C-methyl-D-erythritol + diphosphate. It catalyses the reaction 4-CDP-2-C-methyl-D-erythritol 2-phosphate = 2-C-methyl-D-erythritol 2,4-cyclic diphosphate + CMP. It participates in isoprenoid biosynthesis; isopentenyl diphosphate biosynthesis via DXP pathway; isopentenyl diphosphate from 1-deoxy-D-xylulose 5-phosphate: step 2/6. It functions in the pathway isoprenoid biosynthesis; isopentenyl diphosphate biosynthesis via DXP pathway; isopentenyl diphosphate from 1-deoxy-D-xylulose 5-phosphate: step 4/6. Functionally, bifunctional enzyme that catalyzes the formation of 4-diphosphocytidyl-2-C-methyl-D-erythritol from CTP and 2-C-methyl-D-erythritol 4-phosphate (MEP) (IspD), and catalyzes the conversion of 4-diphosphocytidyl-2-C-methyl-D-erythritol 2-phosphate (CDP-ME2P) to 2-C-methyl-D-erythritol 2,4-cyclodiphosphate (ME-CPP) with a corresponding release of cytidine 5-monophosphate (CMP) (IspF). This is Bifunctional enzyme IspD/IspF from Rhodopseudomonas palustris (strain ATCC BAA-98 / CGA009).